A 313-amino-acid chain; its full sequence is Hsp90 co-chaperone Cdc37-like 1 (313 aa).

This sequence belongs to the CDC37 family. As to quaternary structure, forms complexes with Hsp70 and Hsp90.

Its subcellular location is the cytoplasm. In terms of biological role, co-chaperone that binds to numerous proteins and promotes their interaction with Hsp70 and Hsp90. This chain is Hsp90 co-chaperone Cdc37-like 1 (cdc37l1), found in Danio rerio (Zebrafish).